A 584-amino-acid polypeptide reads, in one-letter code: N(6)-adenosine-methyltransferase subunit METTL3 (584 aa).

2 disordered regions span residues M1–P65 and K162–V221. Over residues R187–S204 the composition is skewed to polar residues. The Nuclear localization signal motif lies at D213–K220. S-adenosyl-L-methionine is bound by residues D381–I382 and D399. A gate loop 1 region spans residues P400–T414. 2 interaction with METTL14 regions span residues D454–E458 and Q468–K484. Residues Q466 to G483 are interphase loop. Residues R469–H482 are positively charged region required for RNA-binding. Positions V511–D519 are gate loop 2. S-adenosyl-L-methionine contacts are provided by residues K517, R540–N543, and N553–Q554.

It belongs to the MT-A70-like family. In terms of assembly, heterodimer; heterodimerizes with mettl14 to form an antiparallel heterodimer that constitutes an active methyltransferase. Component of the WMM complex, a N6-methyltransferase complex composed of a catalytic subcomplex, named MAC, and of an associated subcomplex, named MACOM. The MAC subcomplex is composed of mettl3 and mettl14. Expressed in the hemato-vascular system: enriched in sorted endothelial cells and haemogenic endothelium.

The protein resides in the nucleus. The protein localises to the nucleus speckle. Its subcellular location is the cytoplasm. It carries out the reaction an adenosine in mRNA + S-adenosyl-L-methionine = an N(6)-methyladenosine in mRNA + S-adenosyl-L-homocysteine + H(+). In terms of biological role, the METTL3-METTL14 heterodimer forms a N6-methyltransferase complex that methylates adenosine residues at the N(6) position of some RNAs and regulates various processes such as the circadian clock, differentiation of embryonic and hematopoietic stem cells, cortical neurogenesis, response to DNA damage, differentiation of T-cells and primary miRNA processing. In the heterodimer formed with mettl14, mettl3 constitutes the catalytic core. N6-methyladenosine (m6A), which takes place at the 5'-[AG]GAC-3' consensus sites of some mRNAs, plays a role in mRNA stability, processing and translation efficiency. M6A is also involved in hematopoietic stem cells specification: m6A methylation and subsequent destabilization of mRNAs, such as notch1a, leads to decreased Notch signaling, promoting endothelial to hematopoietic transition. M6A also takes place in other RNA molecules, such as primary miRNA (pri-miRNAs). Mediates methylation of pri-miRNAs. The sequence is that of N(6)-adenosine-methyltransferase subunit METTL3 from Danio rerio (Zebrafish).